We begin with the raw amino-acid sequence, 476 residues long: ATP synthase subunit beta (476 aa).

An ATP-binding site is contributed by 152-159 (GGAGVGKT).

This sequence belongs to the ATPase alpha/beta chains family. As to quaternary structure, F-type ATPases have 2 components, CF(1) - the catalytic core - and CF(0) - the membrane proton channel. CF(1) has five subunits: alpha(3), beta(3), gamma(1), delta(1), epsilon(1). CF(0) has three main subunits: a(1), b(2) and c(9-12). The alpha and beta chains form an alternating ring which encloses part of the gamma chain. CF(1) is attached to CF(0) by a central stalk formed by the gamma and epsilon chains, while a peripheral stalk is formed by the delta and b chains.

The protein localises to the cell inner membrane. It carries out the reaction ATP + H2O + 4 H(+)(in) = ADP + phosphate + 5 H(+)(out). Its function is as follows. Produces ATP from ADP in the presence of a proton gradient across the membrane. The catalytic sites are hosted primarily by the beta subunits. The polypeptide is ATP synthase subunit beta (Granulibacter bethesdensis (strain ATCC BAA-1260 / CGDNIH1)).